Reading from the N-terminus, the 592-residue chain is Movement and RNA silencing protein VP6 (592 aa).

A disordered region spans residues 450 to 469; that stretch reads SSDEENADDPNQGWNGTPVH.

It is found in the host cell junction. The protein localises to the host plasmodesma. Functionally, transports viral genome to neighboring plant cells directly through plasmosdesmata, without any budding. The movement protein allows efficient cell to cell propagation, by bypassing the host cell wall barrier. Displays sequence non-specific nucleic acid binding activity. Acts as a suppressor of RNA-mediated gene silencing, also known as post-transcriptional gene silencing (PTGS), a mechanism of plant viral defense that limits the accumulation of viral RNAs. The polypeptide is Movement and RNA silencing protein VP6 (Oryza latifolia (Indian wild rice)).